Reading from the N-terminus, the 841-residue chain is Translation initiation factor IF-2 (841 aa).

The tract at residues 94-255 (QRSPEEIEAE…RNAHGFQSPT (162 aa)) is disordered. The span at 96–135 (SPEEIEAERKREMDERRAVENAARQKAEEEAKRRAEEDAR) shows a compositional bias: basic and acidic residues. The span at 136 to 175 (NQPAAGQPASAPAQPVAAAEPVREAPAAAAPAPASAAPSA) shows a compositional bias: low complexity. Composition is skewed to basic and acidic residues over residues 176–217 (DARK…EKAP) and 225–234 (TTDEESDSFR). The span at 235–248 (RGGRGKGKLKKRNA) shows a compositional bias: basic residues. The tr-type G domain occupies 341–510 (SRAPVVTVMG…LLQAEVLELK (170 aa)). The tract at residues 350–357 (GHVDHGKT) is G1. 350 to 357 (GHVDHGKT) serves as a coordination point for GTP. The segment at 375-379 (GITQH) is G2. Residues 396–399 (DTPG) are G3. Residues 396–400 (DTPGH) and 450–453 (NKID) contribute to the GTP site. Positions 450–453 (NKID) are G4. The interval 486–488 (SAK) is G5.

Belongs to the TRAFAC class translation factor GTPase superfamily. Classic translation factor GTPase family. IF-2 subfamily.

It is found in the cytoplasm. One of the essential components for the initiation of protein synthesis. Protects formylmethionyl-tRNA from spontaneous hydrolysis and promotes its binding to the 30S ribosomal subunits. Also involved in the hydrolysis of GTP during the formation of the 70S ribosomal complex. This Pseudomonas syringae pv. tomato (strain ATCC BAA-871 / DC3000) protein is Translation initiation factor IF-2.